We begin with the raw amino-acid sequence, 437 residues long: Glutamyl-tRNA reductase (437 aa).

Residues 46-49 (TCNR), S97, 102-104 (EEQ), and Q108 contribute to the substrate site. The active-site Nucleophile is the C47. An NADP(+)-binding site is contributed by 177–182 (GAGEMG). Positions 410 to 437 (NGRVSEGKDAKVEEGKPEVDVQRSKAES) are disordered. Over residues 414 to 437 (SEGKDAKVEEGKPEVDVQRSKAES) the composition is skewed to basic and acidic residues.

It belongs to the glutamyl-tRNA reductase family. In terms of assembly, homodimer.

The enzyme catalyses (S)-4-amino-5-oxopentanoate + tRNA(Glu) + NADP(+) = L-glutamyl-tRNA(Glu) + NADPH + H(+). It functions in the pathway porphyrin-containing compound metabolism; protoporphyrin-IX biosynthesis; 5-aminolevulinate from L-glutamyl-tRNA(Glu): step 1/2. In terms of biological role, catalyzes the NADPH-dependent reduction of glutamyl-tRNA(Glu) to glutamate 1-semialdehyde (GSA). This Archaeoglobus fulgidus (strain ATCC 49558 / DSM 4304 / JCM 9628 / NBRC 100126 / VC-16) protein is Glutamyl-tRNA reductase.